A 33-amino-acid chain; its full sequence is Photosystem II reaction center protein Psb30 (33 aa).

Residues 5–25 (LIGQLVTVALVVGAGPIIIGA) traverse the membrane as a helical segment.

It belongs to the Psb30/Ycf12 family. As to quaternary structure, PSII is composed of 1 copy each of membrane proteins PsbA, PsbB, PsbC, PsbD, PsbE, PsbF, PsbH, PsbI, PsbJ, PsbK, PsbL, PsbM, PsbT, PsbX, PsbY, PsbZ, Psb30/Ycf12, peripheral proteins of the oxygen-evolving complex and a large number of cofactors. It forms dimeric complexes.

The protein resides in the plastid. It localises to the chloroplast thylakoid membrane. Its function is as follows. A core subunit of photosystem II (PSII), probably helps stabilize the reaction center. In Ostreococcus tauri, this protein is Photosystem II reaction center protein Psb30.